The chain runs to 167 residues: Peptide deformylase (167 aa).

The Fe cation site is built by Cys-90 and His-132. The active site involves Glu-133. His-136 provides a ligand contact to Fe cation.

The protein belongs to the polypeptide deformylase family. Requires Fe(2+) as cofactor.

It carries out the reaction N-terminal N-formyl-L-methionyl-[peptide] + H2O = N-terminal L-methionyl-[peptide] + formate. In terms of biological role, removes the formyl group from the N-terminal Met of newly synthesized proteins. Requires at least a dipeptide for an efficient rate of reaction. N-terminal L-methionine is a prerequisite for activity but the enzyme has broad specificity at other positions. This is Peptide deformylase from Dehalococcoides mccartyi (strain ATCC BAA-2100 / JCM 16839 / KCTC 5957 / BAV1).